The primary structure comprises 160 residues: M-phase phosphoprotein 6 (160 aa).

Residues lysine 37 and lysine 86 each participate in a glycyl lysine isopeptide (Lys-Gly) (interchain with G-Cter in SUMO2) cross-link. Phosphoserine is present on serine 110. The Nuclear localization signal signature appears at 116–133 (RRYETLVGTIGKKFARKR). Lysine 127 participates in a covalent cross-link: Glycyl lysine isopeptide (Lys-Gly) (interchain with G-Cter in SUMO2). At threonine 147 the chain carries Phosphothreonine. Residues lysine 150 and lysine 153 each participate in a glycyl lysine isopeptide (Lys-Gly) (interchain with G-Cter in SUMO2) cross-link.

It belongs to the MPP6 family. In terms of assembly, associates with the RNA exosome complex, mediated by EXOSC3. Interacts with ARHGAP18. Interacts with exosome cofactors EXOSC10 and MTREX. Phosphorylated in M (mitotic) phase.

It is found in the nucleus. It localises to the nucleolus. The protein resides in the cytoplasm. Its function is as follows. RNA-binding protein that associates with the RNA exosome complex. Involved in the 3'-processing of the 7S pre-RNA to the mature 5.8S rRNA and play a role in recruiting the RNA exosome complex to pre-rRNA; this function may include C1D. This is M-phase phosphoprotein 6 from Homo sapiens (Human).